A 55-amino-acid chain; its full sequence is Metallothionein-3 (55 aa).

Belongs to the metallothionein superfamily. Type 11 family.

The chain is Metallothionein-3 (MTP3) from Yarrowia lipolytica (strain CLIB 122 / E 150) (Yeast).